Here is an 841-residue protein sequence, read N- to C-terminus: MLGLLRKIVGDPAQKQLKKNEKIVDQVEALADEMKQLSDEQLKNKTTEFKAKLEEGASLNDIVVPALAVAREAAGRVLNEYPYRVQLLGALALHQGNIAEMKTGEGKTLVGTIAVYVQALEGKGVHIVTVNNYLARRDLENYGRIFQFLGLTVGLNENGLTREEKQKAYAADVTYSTNNELGFDYLRDNMVLYKEQMVQRPLHFALIDEVDSILIDEARTPLIISGSVERKTKLYGQANTFVRVLKRDADYTYDEKTKSVQLTDEGVNKAERAFNIDNLYDQKHVQLNHHINQSLKAHVAMHRDADYVVEDGEVVIVDQFTGRLMKGRRYSDGLHQALEAKEGLEVQRESITLASITFQNYFRMYQKLAGMTGTAKTEEEEFRNIYGMDVMVIPTNKPVAREDRPDLIYKTMQGKFNAVVNEIAELHKTGRPVLVGTVNVETSEVVSKMLTRKRIPHHVLNAKNHEREAEIIEKAGHKGAVTIATNMAGRGTDIKLGPGVKELGGLHVLGTERHESRRIDNQLRGRAGRQGDVGSSQFYLSMEDELMRRFGSDNMKAMMEKLGMEDDQPIESSLVSRAVETAQKRVEGNNFDARKQVLQFDDVMREQREIIYRQRMEVLEADNLKTIVENMMKATVERVVQTHCPESLVQEEWDLAAVATYINGQLLSENGISEKELKGKEQEELIELITEKVLAAYHAKEAEVSSEQMREFEKVIMLRTVDRKWMNHIDQMDQLRQGIHLRAYGQNDPLREYRFEGFNMFEAMIAEIEEEVSMYVMKAQVQQNLKREEVAEGKAVRPSANGQEDKKAKRKPVRKAENIGRNDPCICGSGKKYKNCCGANR.

Residues Gln-86, 104–108, and Asp-493 each bind ATP; that span reads GEGKT. The interval 788–822 is disordered; sequence EEVAEGKAVRPSANGQEDKKAKRKPVRKAENIGRN. Zn(2+) contacts are provided by Cys-825, Cys-827, Cys-836, and Cys-837.

This sequence belongs to the SecA family. Monomer and homodimer. Part of the essential Sec protein translocation apparatus which comprises SecA, SecYEG and auxiliary proteins SecDF. Other proteins may also be involved. The cofactor is Zn(2+).

The protein resides in the cell membrane. It localises to the cytoplasm. It carries out the reaction ATP + H2O + cellular proteinSide 1 = ADP + phosphate + cellular proteinSide 2.. Functionally, part of the Sec protein translocase complex. Interacts with the SecYEG preprotein conducting channel. Has a central role in coupling the hydrolysis of ATP to the transfer of proteins into and across the cell membrane, serving as an ATP-driven molecular motor driving the stepwise translocation of polypeptide chains across the membrane. The chain is Protein translocase subunit SecA from Shouchella clausii (strain KSM-K16) (Alkalihalobacillus clausii).